The following is a 193-amino-acid chain: Deoxycytidylate deaminase (193 aa).

A CMP/dCMP-type deaminase domain is found at 1 to 171; that stretch reads MKASTVLQIA…DILRNAGIEV (171 aa). Zn(2+) is bound by residues Cys-19, Cys-49, His-94, Glu-102, and His-104. Glu-106 acts as the Proton donor in catalysis. Cys-132 and Cys-135 together coordinate Zn(2+). Tyr-153 contributes to the substrate binding site.

This sequence belongs to the cytidine and deoxycytidylate deaminase family. In terms of assembly, homohexamer. Zn(2+) serves as cofactor.

The enzyme catalyses dCMP + H2O + H(+) = dUMP + NH4(+). With respect to regulation, allosteric enzyme whose activity is greatly influenced by the end products of its metabolic pathway, dCTP and dTTP. Supplies the nucleotide substrate for thymidylate synthetase. In Escherichia coli (Bacteriophage T4), this protein is Deoxycytidylate deaminase (CD).